The following is a 140-amino-acid chain: MAKKVVAVVKLQCPAGKANPAPPVGPALGQHGVNIMAFCKQYNEATAAQAGLIIPVEITVYEDRSFTFVTKTPPAAVLLKKAAGIETASGTPNKKKVGKVSRAKVQEIAEMKMKDLNAASIEAAMRMIEGTARSMGIEIV.

The protein belongs to the universal ribosomal protein uL11 family. In terms of assembly, part of the ribosomal stalk of the 50S ribosomal subunit. Interacts with L10 and the large rRNA to form the base of the stalk. L10 forms an elongated spine to which L12 dimers bind in a sequential fashion forming a multimeric L10(L12)X complex. One or more lysine residues are methylated.

Functionally, forms part of the ribosomal stalk which helps the ribosome interact with GTP-bound translation factors. The chain is Large ribosomal subunit protein uL11 from Heliobacterium modesticaldum (strain ATCC 51547 / Ice1).